A 178-amino-acid polypeptide reads, in one-letter code: MKATGIVRRIDDLGRVVIPKEIRRTLRIREGDPLEIFVDRDGEVILKKYSPISELGDFAKEYADALYDSLGHSVLICDRDVYIAVSGSSKKDYLNKSISEMLERTMDQRSSVLESDAKSVQLVNGIDEDMNSYTVGPIVANGDPIGAVVIFSKDQTMGEVEHKAVETAAGFLARQMEQ.

In terms of domain architecture, SpoVT-AbrB spans 5–51 (GIVRRIDDLGRVVIPKEIRRTLRIREGDPLEIFVDRDGEVILKKYSP). A GAF-like region spans residues 56 to 178 (GDFAKEYADA…AGFLARQMEQ (123 aa)).

This sequence to B.subtilis AbrB and Abh. In terms of assembly, homotetramer. Two monomers dimerize via their N-terminal swapped-hairpin domains. These dimers further associate into tetramers through helical interactions between their C-terminal GAF-like domains.

In terms of biological role, transcriptional factor that positively regulates or negatively the expression of a large number of forespore-specific sigma G-dependent genes. May provide a mechanism of feedback control that is important for forespore development. SpoVT levels during spore formation have a major impact on the germination and the resistance of the resultant spores. The protein is Stage V sporulation protein T of Bacillus subtilis (strain 168).